The primary structure comprises 116 residues: Large ribosomal subunit protein uL18 (116 aa).

This sequence belongs to the universal ribosomal protein uL18 family. As to quaternary structure, part of the 50S ribosomal subunit; part of the 5S rRNA/L5/L18/L25 subcomplex. Contacts the 5S and 23S rRNAs.

In terms of biological role, this is one of the proteins that bind and probably mediate the attachment of the 5S RNA into the large ribosomal subunit, where it forms part of the central protuberance. The chain is Large ribosomal subunit protein uL18 from Marinomonas sp. (strain MWYL1).